Reading from the N-terminus, the 56-residue chain is Cruciferin (56 aa).

Threonine 45 is modified (phosphothreonine).

This sequence belongs to the 11S seed storage protein (globulins) family. In terms of assembly, hexamer; each subunit is composed of an acidic and a basic chain derived from a single precursor and linked by a disulfide bond.

Functionally, this is a seed storage protein. This is Cruciferin from Sinapis alba (White mustard).